The primary structure comprises 650 residues: 1-deoxy-D-xylulose-5-phosphate synthase 2 (650 aa).

Residues His79 and 120-122 (AHS) each bind thiamine diphosphate. Residue Asp151 participates in Mg(2+) binding. Thiamine diphosphate-binding positions include 152–153 (GS), Asn180, Tyr289, and Glu371. Asn180 lines the Mg(2+) pocket.

Belongs to the transketolase family. DXPS subfamily. As to quaternary structure, homodimer. Mg(2+) is required as a cofactor. It depends on thiamine diphosphate as a cofactor.

The catalysed reaction is D-glyceraldehyde 3-phosphate + pyruvate + H(+) = 1-deoxy-D-xylulose 5-phosphate + CO2. Its pathway is metabolic intermediate biosynthesis; 1-deoxy-D-xylulose 5-phosphate biosynthesis; 1-deoxy-D-xylulose 5-phosphate from D-glyceraldehyde 3-phosphate and pyruvate: step 1/1. Functionally, catalyzes the acyloin condensation reaction between C atoms 2 and 3 of pyruvate and glyceraldehyde 3-phosphate to yield 1-deoxy-D-xylulose-5-phosphate (DXP). The polypeptide is 1-deoxy-D-xylulose-5-phosphate synthase 2 (Zymomonas mobilis subsp. mobilis (strain ATCC 31821 / ZM4 / CP4)).